A 288-amino-acid chain; its full sequence is Cell division protein ZipA (288 aa).

Met1 is a topological domain (periplasmic). A helical transmembrane segment spans residues 2–22 (EIGLREWLIVIGIIVIAGILF). Residues 23-288 (DGWRRMRGGK…ERRALTQRRG (266 aa)) are Cytoplasmic-facing. The tract at residues 48–138 (DEEETTSAEV…DDKPAQRITE (91 aa)) is disordered. Basic and acidic residues-rich tracts occupy residues 64–77 (LDTHKEPQLDEHDL), 85–105 (RDNKRGAGSEKRGDKKRKDEP), and 122–138 (ARDDDFPDDKPAQRITE).

This sequence belongs to the ZipA family. In terms of assembly, interacts with FtsZ via their C-terminal domains.

The protein resides in the cell inner membrane. Functionally, essential cell division protein that stabilizes the FtsZ protofilaments by cross-linking them and that serves as a cytoplasmic membrane anchor for the Z ring. Also required for the recruitment to the septal ring of downstream cell division proteins. The chain is Cell division protein ZipA from Pseudomonas syringae pv. tomato (strain ATCC BAA-871 / DC3000).